Consider the following 114-residue polypeptide: UPF0342 protein NT01CX_2274 (114 aa).

This sequence belongs to the UPF0342 family.

The sequence is that of UPF0342 protein NT01CX_2274 from Clostridium novyi (strain NT).